Consider the following 360-residue polypeptide: UDP-D-xylose:L-fucose alpha-1,3-D-xylosyltransferase MGP4 (360 aa).

A disordered region spans residues 1–25 (MAQQKFLHQRPIQNPFTNPFSSSPL). The Cytoplasmic segment spans residues 1-41 (MAQQKFLHQRPIQNPFTNPFSSSPLSTSSISNRPISLLSRN). The span at 14 to 25 (NPFTNPFSSSPL) shows a compositional bias: low complexity. The helical; Signal-anchor for type II membrane protein transmembrane segment at 42 to 62 (GLLLLLALLVILGVFLPWAGS) threads the bilayer. Residues 63–360 (PLFPSPNKLS…ASESPLGKLE (298 aa)) lie on the Lumenal side of the membrane. Asparagine 93 and asparagine 168 each carry an N-linked (GlcNAc...) asparagine glycan. A DXD motif motif is present at residues 191-193 (DVD). N-linked (GlcNAc...) asparagine glycans are attached at residues asparagine 285 and asparagine 310.

This sequence belongs to the glycosyltransferase 77 family. The cofactor is Mn(2+). Mg(2+) is required as a cofactor. As to expression, widely expressed.

It localises to the golgi apparatus membrane. In terms of biological role, catalyzes the transfer of D-xylose from UDP-alpha-D-xylose onto L-fucose. Probably involved in the biosynthesis of rhamnogalacturonan II (RG-II) through xylosylation of the internal fucose moiety of the A-chain of RG-II, a structurally complex pectic polysaccharide of the primary cell wall. RG-II is essential for the cell wall integrity of rapidly growing tissues such as roots and pollen tube growth and elongation. The chain is UDP-D-xylose:L-fucose alpha-1,3-D-xylosyltransferase MGP4 from Arabidopsis thaliana (Mouse-ear cress).